A 469-amino-acid polypeptide reads, in one-letter code: Glutamate--tRNA ligase (469 aa).

Residues Pro-11 to Asn-21 carry the 'HIGH' region motif. Basic and acidic residues predominate over residues Gly-118 to Pro-131. The interval Gly-118–Pro-139 is disordered. The short motif at Lys-243–Arg-247 is the 'KMSKS' region element. Position 246 (Lys-246) interacts with ATP.

It belongs to the class-I aminoacyl-tRNA synthetase family. Glutamate--tRNA ligase type 1 subfamily. As to quaternary structure, monomer.

Its subcellular location is the cytoplasm. It catalyses the reaction tRNA(Glu) + L-glutamate + ATP = L-glutamyl-tRNA(Glu) + AMP + diphosphate. Functionally, catalyzes the attachment of glutamate to tRNA(Glu) in a two-step reaction: glutamate is first activated by ATP to form Glu-AMP and then transferred to the acceptor end of tRNA(Glu). The protein is Glutamate--tRNA ligase of Burkholderia pseudomallei (strain 668).